The sequence spans 286 residues: Bark leucoagglutinin (286 aa).

The N-terminal stretch at 1-28 is a signal peptide; that stretch reads ATSNSKPTQVLLATFLTFFFLLLNNVNS. Tyrosine 73 lines the N-acetyl-alpha-neuraminyl-(2-&gt;3)-beta-D-galactosyl-(1-&gt;4)-beta-D-glucose pocket. The N-linked (GlcNAc...) asparagine glycan is linked to asparagine 89. Aspartate 115 and lysine 135 together coordinate N-acetyl-alpha-neuraminyl-(2-&gt;3)-beta-D-galactosyl-(1-&gt;4)-beta-D-glucose. N-linked (GlcNAc...) asparagine glycosylation occurs at asparagine 141. Residues glutamate 155 and aspartate 157 each contribute to the Mn(2+) site. Ca(2+) contacts are provided by aspartate 157, tyrosine 159, aspartate 165, and aspartate 168. Positions 159 and 165 each coordinate N-acetyl-alpha-neuraminyl-(2-&gt;3)-beta-D-galactosyl-(1-&gt;4)-beta-D-glucose. Mn(2+) contacts are provided by aspartate 168 and histidine 173. 2 N-linked (GlcNAc...) asparagine glycosylation sites follow: asparagine 207 and asparagine 219. A propeptide spans 278 to 286 (removed in mature form); it reads NVHIARYTA.

Belongs to the leguminous lectin family.

Functionally, sialic acid-binding lectin specifically recognizing the trisaccharide sequence Neu5Ac/Gc-alpha-2,3-Gal-beta-1,4-GlcNAc/Glc. The sequence is that of Bark leucoagglutinin from Maackia amurensis (Amur maackia).